A 486-amino-acid chain; its full sequence is MRGGDGEEGSESRVALLKSPHTAEEDGEGLKDRILVETKKLWQIVGPAIFSRVTTYSMLVITQAFAGHLGDLELAAISIVNNVTVGFNFGLLLGMASALETLCGQAFGAKKYHMLGVYMQRSWIVLFFCCVLLLPTYIFTTPVLKFLGQPDDIAELSGVVAIWVIPLHFAFTLSFPLQRFLQCQLKNRVTAYAAAVALVVHILVCWLFVDGLKLGVVGTVATISISWWVNVLILLVYSTCGGCPLTWTGLSSEALTGLWEFLKLSASSGVMLCLENWYYRILIIMTGNLQNARIAVDSLSICMAINGWEMMIPLAFFAGTGVRVANELGAGNGKGARFATIVSVTQSLIIGLFFWVLIMLLHNQIAWIFSSSVAVLDAVNKLSLLLAFTVLLNSVQPVLSGVAVGSGWQSYVAYINLGCYYCIGVPLGFLMGWGFKLGVMGIWGGMIFGGTAVQTMILSFITMRCDWEKEAQKASARINKWSNTIK.

The segment at 1–25 (MRGGDGEEGSESRVALLKSPHTAEE) is disordered. 12 helical membrane passes run 41-61 (LWQI…MLVI), 74-94 (LAAI…LLLG), 124-144 (IVLF…TPVL), 153-173 (IAEL…AFTL), 189-209 (VTAY…WLFV), 216-236 (VVGT…ILLV), 269-289 (GVML…TGNL), 299-319 (LSIC…FFAG), 349-369 (IIGL…AWIF), 384-404 (LLLA…GVAV), 407-427 (GWQS…GVPL), and 439-461 (VMGI…LSFI).

This sequence belongs to the multi antimicrobial extrusion (MATE) (TC 2.A.66.1) family.

It is found in the membrane. This is Protein DETOXIFICATION 27 from Arabidopsis thaliana (Mouse-ear cress).